We begin with the raw amino-acid sequence, 1254 residues long: Structural polyprotein (1254 aa).

Positions 43–77 (LQAQQMQQLISAVSALTTKQNVKAPKGQRKQKQQK) are host transcription inhibition. The tract at residues 60–112 (TKQNVKAPKGQRKQKQQKPKEKKEKQKKKPTXKKKQQQKPKPQAKKKKPGRRE) is disordered. Residues 70–108 (QRKQKQQKPKEKKEKQKKKPTXKKKQQQKPKPQAKKKKP) carry the Nuclear localization signal motif. Basic residues predominate over residues 84 to 110 (KQKKKPTXKKKQQQKPKPQAKKKKPGR). Residues 95 to 123 (QQQKPKPQAKKKKPGRRERMCMKIENDCI) are binding to the viral RNA. A ribosome-binding region spans residues 108–122 (PGRRERMCMKIENDC). Cys-122 and Cys-137 form a disulfide bridge. The Peptidase S3 domain occupies 122 to 270 (CIFEVKLDGK…RVTPEGTEEW (149 aa)). Catalysis depends on His-148, which acts as the Charge relay system. The Nuclear export signal signature appears at 153–163 (IDNPDLAKLTY). The segment at 164 to 169 (KKSSKY) is interaction with spike glycoprotein E2. The active-site Charge relay system is Asp-170. The dimerization of the capsid protein stretch occupies residues 192-202 (PEGHYNWHHGA). Ser-222 serves as the catalytic Charge relay system. The dimerization of the capsid protein stretch occupies residues 228 to 232 (DNKGR). At 270–694 (WSAALMMCIL…PHEIIQYYYG (425 aa)) the chain is on the extracellular side. The segment at 271–282 (SAALMMCILANT) is functions as an uncleaved signal peptide for the precursor of protein E3/E2. Disulfide bonds link Cys-277/Cys-286, Cys-291/Cys-295, and Cys-294/Cys-326. Asn-281 is a glycosylation site (N-linked (GlcNAc...) asparagine; by host). Asn-328 is a glycosylation site (N-linked (GlcNAc...) asparagine; by host). 6 disulfides stabilise this stretch: Cys-353–Cys-459, Cys-356–Cys-362, Cys-425–Cys-439, Cys-487–Cys-599, Cys-535–Cys-559, and Cys-537–Cys-554. Interaction with host Mxra8 receptor stretches follow at residues 360–363 (YFCY) and 396–398 (HAH). The tract at residues 518 to 521 (TAGN) is interaction with host Mxra8 receptor. Asn-534 carries an N-linked (GlcNAc...) asparagine; by host glycan. The segment at 550–556 (TINTCKI) is interaction with host Mxra8 receptor. N-linked (GlcNAc...) asparagine; by host glycosylation occurs at Asn-596. A helical transmembrane segment spans residues 695–715 (LYPAATIAAVSGASLMALLTL). Residues 716-756 (AATCCMLATARRKCLTPYALTPGAVVPLTLGLLXCAPRANA) are Cytoplasmic-facing. Residue Cys-719 is the site of S-palmitoyl cysteine; by host attachment. Residues 724–728 (TARRK) form an interaction with the capsid protein region. Residues Cys-729 and Cys-750 are each lipidated (S-palmitoyl cysteine; by host). The interval 729–749 (CLTPYALTPGAVVPLTLGLLX) is transient transmembrane before p62-6K protein processing. Cys-729 and Cys-750 are oxidised to a cystine. The Extracellular segment spans residues 757 to 771 (ASFAETMAYLWDENK). Residues 772–792 (TLFWMEXXXXXXALALLACCI) traverse the membrane as a helical segment. A topological domain (cytoplasmic) is located at residue Lys-793. The chain crosses the membrane as a helical span at residues 794-814 (SLICCCKPFSFLVLLSLGASA). Residues 815-1231 (KAYEHTATIP…AMTWVQRMAS (417 aa)) are Extracellular-facing. Cystine bridges form between Cys-865–Cys-930, Cys-878–Cys-910, Cys-879–Cys-912, and Cys-884–Cys-894. The interval 900–917 (VYPFMWGGAYCFCDSENT) is E1 fusion peptide loop. N-linked (GlcNAc...) asparagine; by host glycosylation occurs at Asn-957. Intrachain disulfides connect Cys-1075/Cys-1087, Cys-1117/Cys-1192, Cys-1122/Cys-1196, and Cys-1144/Cys-1186. The chain crosses the membrane as a helical span at residues 1232–1252 (GLGGLALIAVVVLVLVTCITM). The S-palmitoyl cysteine; by host moiety is linked to residue Cys-1249. A lipid anchor (S-stearoyl cysteine; by host) is attached at Cys-1249. The Cytoplasmic segment spans residues 1253 to 1254 (RR).

As to quaternary structure, homodimer. Homomultimer. Interacts with host karyopherin KPNA4; this interaction allows the nuclear import of the viral capsid protein. Interacts with spike glycoprotein E2. Interacts with host IRAK1; the interaction leads to inhibition of IRAK1-dependent signaling. The precursor of protein E3/E2 and E1 form a heterodimer shortly after synthesis. In terms of assembly, the precursor of protein E3/E2 and E1 form a heterodimer shortly after synthesis. Processing of the precursor of protein E3/E2 into E2 and E3 results in a heterodimer of the spike glycoproteins E2 and E1. Spike at virion surface are constituted of a trimer of E2-E1 heterodimers. After target cell attachment and endocytosis, E1 change conformation to form homotrimers. Interacts with 6K protein. As to quaternary structure, interacts with spike glycoprotein E1. Processing of the precursor of protein E3/E2 into E2 and E3 results in a heterodimer of the spike glycoproteins E2 and E1. Spike at virion surface are constituted of a trimer of E2-E1 heterodimers. Interacts with 6K protein. Interacts with host MXRA8; this interaction mediates virus entry. Structural polyprotein: Specific enzymatic cleavages in vivo yield mature proteins. Capsid protein is auto-cleaved during polyprotein translation, unmasking a signal peptide at the N-terminus of the precursor of E3/E2. The remaining polyprotein is then targeted to the host endoplasmic reticulum, where host signal peptidase cleaves it into pE2, 6K and E1 proteins. pE2 is further processed to mature E3 and E2 by host furin in trans-Golgi vesicle. In terms of processing, palmitoylated via thioester bonds. These palmitoylations may induce disruption of the C-terminus transmembrane. This would result in the reorientation of E2 C-terminus from lumenal to cytoplasmic side. Post-translationally, N-glycosylated. Palmitoylated via thioester bonds.

Its subcellular location is the virion. The protein resides in the host cytoplasm. It is found in the host cell membrane. The protein localises to the host nucleus. It localises to the virion membrane. Its subcellular location is the host Golgi apparatus. The protein resides in the host trans-Golgi network. It is found in the host endoplasmic reticulum. It catalyses the reaction Autocatalytic release of the core protein from the N-terminus of the togavirus structural polyprotein by hydrolysis of a -Trp-|-Ser- bond.. Its function is as follows. Forms an icosahedral capsid with a T=4 symmetry composed of 240 copies of the capsid protein surrounded by a lipid membrane through which penetrate 80 spikes composed of trimers of E1-E2 heterodimers. The capsid protein binds to the viral RNA genome at a site adjacent to a ribosome binding site for viral genome translation following genome release. Possesses a protease activity that results in its autocatalytic cleavage from the nascent structural protein. Following its self-cleavage, the capsid protein transiently associates with ribosomes, and within several minutes the protein binds to viral RNA and rapidly assembles into icosahedric core particles. The resulting nucleocapsid eventually associates with the cytoplasmic domain of the spike glycoprotein E2 at the cell membrane, leading to budding and formation of mature virions. In case of infection, new virions attach to target cells and after clathrin-mediated endocytosis their membrane fuses with the host endosomal membrane. This leads to the release of the nucleocapsid into the cytoplasm, followed by an uncoating event necessary for the genomic RNA to become accessible. The uncoating might be triggered by the interaction of capsid proteins with ribosomes. Binding of ribosomes would release the genomic RNA since the same region is genomic RNA-binding and ribosome-binding. Specifically inhibits interleukin-1 receptor-associated kinase 1/IRAK1-dependent signaling during viral entry, representing a means by which the alphaviruses may evade innate immune detection and activation prior to viral gene expression. In terms of biological role, provides the signal sequence for the translocation of the precursor of protein E3/E2 to the host endoplasmic reticulum. Furin-cleaved E3 remains associated with spike glycoprotein E1 and mediates pH protection of the latter during the transport via the secretory pathway. After virion release from the host cell, the assembly protein E3 is gradually released in the extracellular space. Functionally, plays a role in viral attachment to target host cell, by binding to the cell receptor MXRA8. The host LDLR may also act as a cell receptor for viral entry. Synthesized as a p62 precursor which is processed by furin at the cell membrane just before virion budding, giving rise to E2-E1 heterodimer. The p62-E1 heterodimer is stable, whereas E2-E1 is unstable and dissociate at low pH. p62 is processed at the last step, presumably to avoid E1 fusion activation before its final export to cell surface. E2 C-terminus contains a transitory transmembrane that would be disrupted by palmitoylation, resulting in reorientation of the C-terminal tail from lumenal to cytoplasmic side. This step is critical since E2 C-terminus is involved in budding by interacting with capsid proteins. This release of E2 C-terminus in cytoplasm occurs lately in protein export, and precludes premature assembly of particles at the endoplasmic reticulum membrane. Acts as a viroporin that participates in virus glycoprotein processing and transport to the plasma membrane, cell permeabilization and budding of viral particles. The cation channel is permeable to Na(+)&gt;K(+)&gt;Ca(2+) in vitro. Disrupts the calcium homeostasis of the cell, probably at the endoplasmic reticulum level. This leads to cytoplasmic calcium elevation. Because of its lipophilic properties, the 6K protein is postulated to influence the selection of lipids that interact with the transmembrane domains of the glycoproteins, which, in turn, affects the deformability of the bilayer required for the extreme curvature that occurs as budding proceeds. Present in low amount in virions, about 3% compared to viral glycoproteins. Its function is as follows. Class II viral fusion protein. Fusion activity is inactive as long as E1 is bound to E2 in mature virion. After virus attachment to target cell via host MXRA8 and endocytosis, acidification of the endosome induce dissociation of E1/E2 heterodimer and concomitant trimerization of the E1 subunits. This E1 trimer is fusion active, and promotes release of viral nucleocapsid in cytoplasm after endosome and viral membrane fusion. Efficient fusion requires the presence of cholesterol and sphingolipid in the target membrane. This chain is Structural polyprotein, found in Ross river virus (strain NB5092) (RRV).